The following is a 289-amino-acid chain: MDVTWTVKYITEFVGTALLIIMGNGAVANVELKGTKAHAQSWMIIGWGYGLGVMLPAVAFGNITSQINPAFTLGLAASGLFPWAHVAQYIIAQVLGAMFGQLLIVMVYRPYYLKTQNPNAILGTFSTIDNVDDNDKKTRLGATINGFLNEFVGSFVLFFGAVAATNIFFGSQSITWMTNYLKGQGADVSSSDIMNQIWVQASGASASKMVAHLFLGFLVMGLVVALGGPTGPGLNPARDFGPRLVHSLLPKSVLGEAKGSSKWWYAWVPVLAPILASLAAVALFKMIYL.

2 helical membrane passes run 10 to 30 (ITEF…VANV) and 41 to 61 (SWMI…VAFG). The NPA 1 signature appears at 68 to 70 (NPA). A run of 3 helical transmembrane segments spans residues 87–107 (AQYI…IVMV), 151–171 (FVGS…FFGS), and 209–229 (MVAH…LGGP). Residues 235–237 (NPA) carry the NPA 2 motif. The helical transmembrane segment at 264-284 (WYAWVPVLAPILASLAAVALF) threads the bilayer.

Belongs to the MIP/aquaporin (TC 1.A.8) family.

Its subcellular location is the cell membrane. In terms of biological role, mixed channel protein that transports both water and glycerol. The polypeptide is Glycerol facilitator-aquaporin gla (gla) (Lactococcus lactis subsp. lactis (strain IL1403) (Streptococcus lactis)).